Reading from the N-terminus, the 459-residue chain is tRNA modification GTPase MnmE (459 aa).

(6S)-5-formyl-5,6,7,8-tetrahydrofolate contacts are provided by Arg-25, Glu-87, and Arg-126. The 160-residue stretch at 221 to 380 folds into the TrmE-type G domain; sequence GLKVAIVGRP…LETAILEIVQ (160 aa). Asn-231 contributes to the K(+) binding site. GTP-binding positions include 231–236, 250–256, and 275–278; these read NVGKSS, TDLPGTT, and DTAG. Residue Ser-235 coordinates Mg(2+). The K(+) site is built by Thr-250, Leu-252, and Thr-255. Thr-256 serves as a coordination point for Mg(2+). Lys-459 serves as a coordination point for (6S)-5-formyl-5,6,7,8-tetrahydrofolate.

This sequence belongs to the TRAFAC class TrmE-Era-EngA-EngB-Septin-like GTPase superfamily. TrmE GTPase family. As to quaternary structure, homodimer. Heterotetramer of two MnmE and two MnmG subunits. K(+) is required as a cofactor.

It is found in the cytoplasm. Its function is as follows. Exhibits a very high intrinsic GTPase hydrolysis rate. Involved in the addition of a carboxymethylaminomethyl (cmnm) group at the wobble position (U34) of certain tRNAs, forming tRNA-cmnm(5)s(2)U34. This chain is tRNA modification GTPase MnmE, found in Nostoc sp. (strain PCC 7120 / SAG 25.82 / UTEX 2576).